Here is an 883-residue protein sequence, read N- to C-terminus: Phosphoenolpyruvate carboxylase (883 aa).

Residues His138 and Lys546 contribute to the active site.

Belongs to the PEPCase type 1 family. It depends on Mg(2+) as a cofactor.

The catalysed reaction is oxaloacetate + phosphate = phosphoenolpyruvate + hydrogencarbonate. Forms oxaloacetate, a four-carbon dicarboxylic acid source for the tricarboxylic acid cycle. The protein is Phosphoenolpyruvate carboxylase of Salmonella dublin (strain CT_02021853).